We begin with the raw amino-acid sequence, 387 residues long: MSVIKMTDLDLAGKRILIRADLNVPVKDGKVTSDARIRASLPTIEAALKQGAKVMITSHLGRPTEGEYSEEFSLKPVVDYLEEKLSSPVRLEKEYLEGVDVAEGELVVLENVRFNKGEKKDDETLAKKYASLCDIYVMDAFGTAHRAQASTHGVAKFAPVACAGPLLSAELEALGKALDNPARPMVAIVGGSKVSTKLTVLDTLSKIADQLIVGGGIANTFVAAEGHNVGRSLYEDDLLPEAKKLLISCDIPVPTDVRVATEFSETAEAILKSTHDIKDDEQILDLGDESAQRLADILKNAKTILWNGPVGVFEFPNFRQGTEIVARAIADSDAFSIAGGGDTLAAIDLFGIADKISYISTGGGAFLEFVEGKKLPAVVMLEERAKQ.

Substrate contacts are provided by residues 21–23 (DLN), arginine 36, 59–62 (HLGR), arginine 113, and arginine 146. Residues lysine 197, glutamate 314, and 340 to 343 (GGDT) contribute to the ATP site.

The protein belongs to the phosphoglycerate kinase family. As to quaternary structure, monomer.

It localises to the cytoplasm. The catalysed reaction is (2R)-3-phosphoglycerate + ATP = (2R)-3-phospho-glyceroyl phosphate + ADP. The protein operates within carbohydrate degradation; glycolysis; pyruvate from D-glyceraldehyde 3-phosphate: step 2/5. This Photorhabdus laumondii subsp. laumondii (strain DSM 15139 / CIP 105565 / TT01) (Photorhabdus luminescens subsp. laumondii) protein is Phosphoglycerate kinase.